A 329-amino-acid polypeptide reads, in one-letter code: Malate dehydrogenase 2 (329 aa).

Glycine 12–alanine 18 lines the NAD(+) pocket. Residues arginine 93 and arginine 99 each coordinate substrate. Residues asparagine 106, glutamine 113, and valine 130 to asparagine 132 each bind NAD(+). Substrate-binding residues include asparagine 132 and arginine 163. Catalysis depends on histidine 188, which acts as the Proton acceptor.

Belongs to the LDH/MDH superfamily. MDH type 2 family.

It carries out the reaction (S)-malate + NAD(+) = oxaloacetate + NADH + H(+). Catalyzes the reversible oxidation of malate to oxaloacetate. The protein is Malate dehydrogenase 2 of Burkholderia thailandensis (strain ATCC 700388 / DSM 13276 / CCUG 48851 / CIP 106301 / E264).